The sequence spans 360 residues: DNA replication and repair protein RecF (360 aa).

30-37 (GQNGSGKT) provides a ligand contact to ATP.

Belongs to the RecF family.

The protein resides in the cytoplasm. Its function is as follows. The RecF protein is involved in DNA metabolism; it is required for DNA replication and normal SOS inducibility. RecF binds preferentially to single-stranded, linear DNA. It also seems to bind ATP. The chain is DNA replication and repair protein RecF from Shewanella loihica (strain ATCC BAA-1088 / PV-4).